We begin with the raw amino-acid sequence, 562 residues long: Tubby-related protein 2 (562 aa).

The tract at residues 1–81 is disordered; it reads MDREGPRGPR…RRGEERFQSD (81 aa). Residues 35-46 are compositionally biased toward basic and acidic residues; the sequence is QKLEQQRQLFEK. Residues S152, S153, and S155 each carry the phosphoserine modification. The interval 179-294 is disordered; the sequence is LRRGWLASPG…SNHNAWNMTC (116 aa). T211 bears the Phosphothreonine mark. S213 carries the phosphoserine modification. Positions 225–240 are enriched in basic and acidic residues; sequence DGDHGDLAPCKVEENT. A compositionally biased stretch (polar residues) spans 285–294; the sequence is SNHNAWNMTC.

The protein belongs to the TUB family. In terms of tissue distribution, expressed in retina and testis.

Its subcellular location is the cytoplasm. The protein localises to the secreted. This Mus musculus (Mouse) protein is Tubby-related protein 2 (Tulp2).